Consider the following 156-residue polypeptide: MPRRREVPKRDVLPDPKFGSVELTKFMNVLMIDGKKSVAERIVYGALEQIEKKTGKAAIEVFNEAIANSKPIVEVKSRRVGGANYQVPVEVRPSRRLALAMRWVRDAARKRGEKSMDLRLAGELIDASEGRGGALKKREEVHRMAEANKAFSHFRF.

It belongs to the universal ribosomal protein uS7 family. Part of the 30S ribosomal subunit. Contacts proteins S9 and S11.

Functionally, one of the primary rRNA binding proteins, it binds directly to 16S rRNA where it nucleates assembly of the head domain of the 30S subunit. Is located at the subunit interface close to the decoding center, probably blocks exit of the E-site tRNA. The chain is Small ribosomal subunit protein uS7 from Neisseria gonorrhoeae (strain ATCC 700825 / FA 1090).